Consider the following 429-residue polypeptide: GTPase Obg (429 aa).

Positions Met-1–Leu-158 constitute an Obg domain. The OBG-type G domain occupies Ala-159–Ser-329. GTP contacts are provided by residues Gly-165–Ser-172, Phe-190–Thr-194, Asp-212–Gly-215, Asn-282–Asp-285, and Ser-310–Leu-312. Mg(2+) is bound by residues Ser-172 and Thr-192. In terms of domain architecture, OCT spans Ile-344 to Asp-421.

This sequence belongs to the TRAFAC class OBG-HflX-like GTPase superfamily. OBG GTPase family. Monomer. Mg(2+) is required as a cofactor.

It is found in the cytoplasm. In terms of biological role, an essential GTPase which binds GTP, GDP and possibly (p)ppGpp with moderate affinity, with high nucleotide exchange rates and a fairly low GTP hydrolysis rate. Plays a role in control of the cell cycle, stress response, ribosome biogenesis and in those bacteria that undergo differentiation, in morphogenesis control. This chain is GTPase Obg, found in Carboxydothermus hydrogenoformans (strain ATCC BAA-161 / DSM 6008 / Z-2901).